The sequence spans 220 residues: Glycerol-3-phosphate acyltransferase (220 aa).

6 consecutive transmembrane segments (helical) span residues 11–31 (INVIFTLLGYLIGGIPFGYAL), 70–90 (LLVLILDLFKGMFAVFLSKLF), 96–116 (LQWMVAIASILGHCYSPFLNF), 127–147 (GSVVLLIPIESLIGLTVWFFV), 153–173 (ISSLASILGVGTATVLIFFVP), and 192–212 (PMVLIFIFTLIKHAGNIFNLL).

It belongs to the PlsY family. In terms of assembly, probably interacts with PlsX.

The protein localises to the cell inner membrane. The catalysed reaction is an acyl phosphate + sn-glycerol 3-phosphate = a 1-acyl-sn-glycero-3-phosphate + phosphate. It functions in the pathway lipid metabolism; phospholipid metabolism. Functionally, catalyzes the transfer of an acyl group from acyl-phosphate (acyl-PO(4)) to glycerol-3-phosphate (G3P) to form lysophosphatidic acid (LPA). This enzyme utilizes acyl-phosphate as fatty acyl donor, but not acyl-CoA or acyl-ACP. This chain is Glycerol-3-phosphate acyltransferase, found in Helicobacter pylori (strain J99 / ATCC 700824) (Campylobacter pylori J99).